The chain runs to 146 residues: Hemoglobin subunit beta (146 aa).

Valine 1 bears the N-acetylvaline mark. The 145-residue stretch at 2 to 146 (HLTGEEKSAV…VANALAHKYH (145 aa)) folds into the Globin domain. Phosphothreonine is present on threonine 12. Serine 44 carries the post-translational modification Phosphoserine. Lysine 59 is modified (N6-acetyllysine). Position 63 (histidine 63) interacts with heme b. Lysine 82 is subject to N6-acetyllysine. Heme b is bound at residue histidine 92. Position 93 is an S-nitrosocysteine (cysteine 93). Lysine 144 is subject to N6-acetyllysine.

The protein belongs to the globin family. Heterotetramer of two alpha chains and two beta chains. Red blood cells.

Involved in oxygen transport from the lung to the various peripheral tissues. This Saguinus mystax (Moustached tamarin) protein is Hemoglobin subunit beta (HBB).